We begin with the raw amino-acid sequence, 211 residues long: Synaptosomal-associated protein 23 (211 aa).

An N-acetylmethionine modification is found at Met1. Phosphoserine is present on residues Ser5, Ser6, Ser20, Ser23, and Ser34. Residues 14–76 form the t-SNARE coiled-coil homology 1 domain; the sequence is HQITDESLES…RETEKTLTEL (63 aa). Residues 23–76 adopt a coiled-coil conformation; the sequence is STRRILGLAIESQDAGIKTITMLDEQKEQLNRIEEGLDQINKDMRETEKTLTEL. S-palmitoyl cysteine attachment occurs at residues Cys79, Cys80, Cys83, Cys85, and Cys87. Ser110 carries the post-translational modification Phosphoserine. A lipid anchor (S-palmitoyl cysteine) is attached at Cys112. One can recognise a t-SNARE coiled-coil homology 2 domain in the interval 146 to 208; it reads DAREDEMEEN…DIANARAKKL (63 aa). Phosphoserine is present on Ser161.

This sequence belongs to the SNAP-25 family. Homotetramer (via coiled-coil domain), also forms heterotetramers with STX4 and VAMP3. Found in a complex with VAMP8 and STX1A. Found in a complex with VAMP8 and STX4 in pancreas. Interacts simultaneously with SNAPIN and SYN4. Interacts with STX1A. Interacts with STX12. Interacts tightly to multiple syntaxins and synaptobrevins/VAMPs. Interacts with ZDHHC13 (via ANK repeats). Interacts with ZDHHC17 (via ANK repeats). As to expression, ubiquitous. Highest levels where found in placenta.

The protein resides in the cell membrane. The protein localises to the synapse. Its subcellular location is the synaptosome. Its function is as follows. Essential component of the high affinity receptor for the general membrane fusion machinery and an important regulator of transport vesicle docking and fusion. This Homo sapiens (Human) protein is Synaptosomal-associated protein 23 (SNAP23).